Consider the following 130-residue polypeptide: Small ribosomal subunit protein uS11 (130 aa).

Belongs to the universal ribosomal protein uS11 family. As to quaternary structure, part of the 30S ribosomal subunit. Interacts with proteins S7 and S18. Binds to IF-3.

Functionally, located on the platform of the 30S subunit, it bridges several disparate RNA helices of the 16S rRNA. Forms part of the Shine-Dalgarno cleft in the 70S ribosome. The sequence is that of Small ribosomal subunit protein uS11 from Acholeplasma laidlawii (strain PG-8A).